We begin with the raw amino-acid sequence, 94 residues long: Co-chaperonin GroES (94 aa).

The protein belongs to the GroES chaperonin family. As to quaternary structure, heptamer of 7 subunits arranged in a ring. Interacts with the chaperonin GroEL.

The protein localises to the cytoplasm. In terms of biological role, together with the chaperonin GroEL, plays an essential role in assisting protein folding. The GroEL-GroES system forms a nano-cage that allows encapsulation of the non-native substrate proteins and provides a physical environment optimized to promote and accelerate protein folding. GroES binds to the apical surface of the GroEL ring, thereby capping the opening of the GroEL channel. The polypeptide is Co-chaperonin GroES (Geobacillus thermodenitrificans (strain NG80-2)).